The chain runs to 616 residues: Dihydroxy-acid dehydratase (616 aa).

D81 contacts Mg(2+). C122 contacts [2Fe-2S] cluster. The Mg(2+) site is built by D123 and K124. K124 carries the N6-carboxylysine modification. [2Fe-2S] cluster is bound at residue C195. E491 lines the Mg(2+) pocket. The Proton acceptor role is filled by S517.

This sequence belongs to the IlvD/Edd family. Homodimer. It depends on [2Fe-2S] cluster as a cofactor. The cofactor is Mg(2+).

It catalyses the reaction (2R)-2,3-dihydroxy-3-methylbutanoate = 3-methyl-2-oxobutanoate + H2O. The catalysed reaction is (2R,3R)-2,3-dihydroxy-3-methylpentanoate = (S)-3-methyl-2-oxopentanoate + H2O. The protein operates within amino-acid biosynthesis; L-isoleucine biosynthesis; L-isoleucine from 2-oxobutanoate: step 3/4. It participates in amino-acid biosynthesis; L-valine biosynthesis; L-valine from pyruvate: step 3/4. Its function is as follows. Functions in the biosynthesis of branched-chain amino acids. Catalyzes the dehydration of (2R,3R)-2,3-dihydroxy-3-methylpentanoate (2,3-dihydroxy-3-methylvalerate) into 2-oxo-3-methylpentanoate (2-oxo-3-methylvalerate) and of (2R)-2,3-dihydroxy-3-methylbutanoate (2,3-dihydroxyisovalerate) into 2-oxo-3-methylbutanoate (2-oxoisovalerate), the penultimate precursor to L-isoleucine and L-valine, respectively. The polypeptide is Dihydroxy-acid dehydratase (Yersinia pseudotuberculosis serotype O:3 (strain YPIII)).